Here is a 212-residue protein sequence, read N- to C-terminus: Small ribosomal subunit protein uS19m (212 aa).

A mitochondrion-targeting transit peptide spans 1–29 (MAFCTKLGGHWKQGVNVPVSSMLGSLRYM). Positions 31 to 109 (TKLYIGGLSP…FNISVNVAKD (79 aa)) constitute an RRM domain.

It belongs to the universal ribosomal protein uS19 family. Component of the mitochondrial ribosome small subunit.

It is found in the mitochondrion. In terms of biological role, the RNA-binding domain found in RPS19 may functionally replace the missing mitochondrial RPS13. This is Small ribosomal subunit protein uS19m (RPS19) from Arabidopsis thaliana (Mouse-ear cress).